Reading from the N-terminus, the 358-residue chain is Protein-glutamate methylesterase/protein-glutamine glutaminase 1 (358 aa).

Residues 8–125 form the Response regulatory domain; sequence RVLIVDDSAV…ARGLEGYAEE (118 aa). D59 is subject to 4-aspartylphosphate. A CheB-type methylesterase domain is found at 165 to 352; sequence FRTTDRLIAI…LDRVAERLLA (188 aa). Residues S177, H203, and D299 contribute to the active site.

The protein belongs to the CheB family. Post-translationally, phosphorylated by CheA. Phosphorylation of the N-terminal regulatory domain activates the methylesterase activity.

It localises to the cytoplasm. It carries out the reaction [protein]-L-glutamate 5-O-methyl ester + H2O = L-glutamyl-[protein] + methanol + H(+). It catalyses the reaction L-glutaminyl-[protein] + H2O = L-glutamyl-[protein] + NH4(+). Involved in chemotaxis. Part of a chemotaxis signal transduction system that modulates chemotaxis in response to various stimuli. Catalyzes the demethylation of specific methylglutamate residues introduced into the chemoreceptors (methyl-accepting chemotaxis proteins or MCP) by CheR. Also mediates the irreversible deamidation of specific glutamine residues to glutamic acid. In Xanthomonas axonopodis pv. citri (strain 306), this protein is Protein-glutamate methylesterase/protein-glutamine glutaminase 1.